The primary structure comprises 367 residues: Bi-functional coumaroyl CoA and feruloyl CoA ortho-hydroxylase Diox4 (367 aa).

A Fe2OG dioxygenase domain is found at I207–P317. A 2-oxoglutarate-binding site is contributed by Y223. Fe cation-binding residues include H238, D240, and H298. 2-oxoglutarate contacts are provided by R308 and S310.

Belongs to the iron/ascorbate-dependent oxidoreductase family. L-ascorbate serves as cofactor. Requires Fe(2+) as cofactor.

It catalyses the reaction (E)-4-coumaroyl-CoA + 2-oxoglutarate + O2 = (E)-2,4-dihydroxycinnamoyl-CoA + succinate + CO2. It carries out the reaction (E)-feruloyl-CoA + 2-oxoglutarate + O2 = (E)-6-hydroxyferuloyl-CoA + succinate + CO2. It participates in phenylpropanoid metabolism. Its activity is regulated as follows. Repressed by the competitive inhibitor psoralen, but not by umbelliferone, xanthotoxin, bergapten and isopimpinellin. Its function is as follows. 2-oxoglutarate (OG)- and Fe(II)-dependent dioxygenase (2OGD) involved in scopoletin and umbelliferone biosynthesis. Converts feruloyl CoA into 6'-hydroxyferuloyl CoA, and p-coumaroyl CoA into 2,4-dihydroxycinnamoyl-CoA. Has no activity with cinnamic acid, caffeic acid, p-coumaric acid, ferulic acid, cinnamoyl-CoA and caffeoyl-CoA. This chain is Bi-functional coumaroyl CoA and feruloyl CoA ortho-hydroxylase Diox4, found in Ruta graveolens (Common rue).